Here is a 221-residue protein sequence, read N- to C-terminus: uncharacterized protein (221 aa).

5 helical membrane-spanning segments follow: residues Phe2 to Val22, Leu34 to Ala54, Ala97 to Ile117, Ala131 to Ile151, and Ile177 to Ile197.

This sequence belongs to the peroxisomal membrane protein PXMP2/4 family.

It localises to the membrane. This is an uncharacterized protein from Schizosaccharomyces pombe (strain 972 / ATCC 24843) (Fission yeast).